Here is a 108-residue protein sequence, read N- to C-terminus: Small ribosomal subunit protein bS6 (108 aa).

Belongs to the bacterial ribosomal protein bS6 family.

Binds together with bS18 to 16S ribosomal RNA. The polypeptide is Small ribosomal subunit protein bS6 (Dichelobacter nodosus (strain VCS1703A)).